The following is a 764-amino-acid chain: Chloride anion exchanger (764 aa).

The Cytoplasmic segment spans residues methionine 1–aspartate 76. The chain crosses the membrane as a helical span at residues isoleucine 77–leucine 97. The Extracellular portion of the chain corresponds to valine 98–aspartate 99. The helical transmembrane segment at isoleucine 100 to glycine 120 threads the bilayer. Topologically, residues threonine 121 to histidine 124 are cytoplasmic. Residues isoleucine 125–valine 145 traverse the membrane as a helical segment. The Extracellular segment spans residues serine 146 to arginine 175. N-linked (GlcNAc...) asparagine glycosylation is found at asparagine 153, asparagine 161, and asparagine 165. Residues valine 176–leucine 196 form a helical membrane-spanning segment. Position 197 (arginine 197) is a topological domain, cytoplasmic. The chain crosses the membrane as a helical span at residues isoleucine 198–alanine 218. At valine 219 to threonine 257 the chain is on the extracellular side. Residues asparagine 258–isoleucine 278 traverse the membrane as a helical segment. Over asparagine 279–aspartate 342 the chain is Cytoplasmic. A helical membrane pass occupies residues cysteine 343–leucine 363. Over lysine 364 to glutamate 374 the chain is Extracellular. Residues leucine 375–threonine 395 form a helical membrane-spanning segment. The Cytoplasmic portion of the chain corresponds to alanine 396–glutamine 411. The helical transmembrane segment at isoleucine 412–leucine 432 threads the bilayer. Residues alanine 433–cysteine 469 lie on the Extracellular side of the membrane. Residues leucine 470–alanine 490 traverse the membrane as a helical segment. Topologically, residues serine 491–aspartate 701 are cytoplasmic. Residues aspartate 525–isoleucine 720 enclose the STAS domain. The PDZ-binding signature appears at glutamate 761 to phenylalanine 764.

The protein belongs to the SLC26A/SulP transporter (TC 2.A.53) family. Interacts with CFTR, SLC26A6 and NHERF1. Interacts with PDZK1. Interacts (via PDZ-binding motif) with NHERF4 (via the third PDZ domain); interaction leads to decreased expression of SLC26A3 on the cell membrane resulting in its reduced exchanger activity. Post-translationally, N-glycosylation is required for efficient cell surface expression, and protection from proteolytic degradation. As to expression, expressed in the colon. Expression is significantly decreased in adenomas (polyps) and adenocarcinomas of the colon.

It localises to the apical cell membrane. The protein localises to the membrane. The protein resides in the cell membrane. It carries out the reaction hydrogencarbonate(in) + 2 chloride(out) = hydrogencarbonate(out) + 2 chloride(in). Its activity is regulated as follows. Inhibited by acidic pH. Functionally, mediates chloride-bicarbonate exchange with a chloride bicarbonate stoichiometry of 2:1 in the intestinal epithelia. Plays a role in the chloride and bicarbonate homeostasis during sperm epididymal maturation and capacitation. This chain is Chloride anion exchanger (SLC26A3), found in Homo sapiens (Human).